Reading from the N-terminus, the 311-residue chain is MKAKRRILLQLLTFCLFLLLLAKIHFRNHQEEELLLSDWFNPRRRLDVITTTDWLAPIIWEGTFDRKVLETYFRKQNITVGLAVFAVGSLTDKYLDPFLQSASKFFMPGYRVIFYIMVDKYLQLQEMEHNPLQSFQVLKIGKERWWSNFDLMRMKILSEHIRDHIRYEVDFLFSMNINMVFQSEFGVETLSTSVAQLHPWWYFRKRTNLPYERKPTSVAHIPFGLGDFYYAGAIIGGVPFQVLDFAQQYLKGVFLDTENGVNSTYEKYLNKYFFLNKPTKLLSPEYSWDPTFNLPRHVWFVKIAHHPIDTL.

Topologically, residues 1–5 (MKAKR) are cytoplasmic. A helical; Signal-anchor for type II membrane protein transmembrane segment spans residues 6–26 (RILLQLLTFCLFLLLLAKIHF). Residues 27–311 (RNHQEEELLL…KIAHHPIDTL (285 aa)) are Lumenal-facing. N-linked (GlcNAc...) asparagine glycosylation is present at N77. Substrate contacts are provided by residues 85–90 (FAVGSL), 176–178 (NIN), and 198–201 (HPWW). E266 serves as the catalytic Nucleophile.

The protein belongs to the glycosyltransferase 6 family. Mn(2+) serves as cofactor.

The protein localises to the membrane. In Mus musculus (Mouse), this protein is Glycosyltransferase 6 domain-containing protein 1 (Glt6d1).